Reading from the N-terminus, the 391-residue chain is MKGRFGRFGGQYVPETVMNALIELEREFEEAKKDEKFMEEYRYYLKEYSGRPTPLYYAENLTKRLGGAKIYLKREDLNHTGAHKINNVLGQVLLAKRMGKKRIIAETGAGQHGVATATAAAMFGMECEIFMGEEDIKRQALNVFRMKLLGAKVTAVTSGTRTLKDAVNEAIRDWVTNIETTFYVIGSVVGPHPYPTMVRDFQRVIGDETKEQILEKEGRLPDYVVACVGGGSNAMGIFYPFIEDKGVKLVGVEAAGEGIETGKHASAMAKGSVGVLHGMMTYLLQDEEGKILPVHSISAGLDYPGVGPEHAYLKEIGRAEYVYATDEEALAAFMDLSRTEGIIPALESAHALAYAMKLAKKLDEDKIIVVNLSGRGDKDVNTVAKVMGVEL.

Position 84 is an N6-(pyridoxal phosphate)lysine (K84).

Belongs to the TrpB family. As to quaternary structure, tetramer of two alpha and two beta chains. It depends on pyridoxal 5'-phosphate as a cofactor.

The enzyme catalyses (1S,2R)-1-C-(indol-3-yl)glycerol 3-phosphate + L-serine = D-glyceraldehyde 3-phosphate + L-tryptophan + H2O. Its pathway is amino-acid biosynthesis; L-tryptophan biosynthesis; L-tryptophan from chorismate: step 5/5. In terms of biological role, the beta subunit is responsible for the synthesis of L-tryptophan from indole and L-serine. The polypeptide is Tryptophan synthase beta chain (Caldanaerobacter subterraneus subsp. tengcongensis (strain DSM 15242 / JCM 11007 / NBRC 100824 / MB4) (Thermoanaerobacter tengcongensis)).